A 468-amino-acid chain; its full sequence is Putative ankyrin repeat protein R873 (468 aa).

ANK repeat units follow at residues 38-68, 78-107, 109-137, 138-167, 169-197, 198-227, 229-257, 258-287, 289-316, 317-346, 348-376, 378-406, 407-436, and 438-466; these read IKTDIIEYIVDNNLLDVLKYFVVLKNLKHNL, SLNENLVKNCEKGNIEIIKYLLDIGADIEG, DNCAVLTASHHGHIEVVKYLVCKGANFRA, NNDKAVRWASDKGHLDVVKYLVSQGSDIRS, NDCSICWASGNGHLEMVKYLVSQGVNIRT, NDDWAIRLASENGHLEVVKYLVSQGADIRS, DDHAIKWASGNGHLEMVKYLVSQSSNIIA, EDNYAVRWASENGHLEVIKYLVSQGSNITS, YYTIIAASKNGHIDIVKYLVSQGVNIRD, CDSSAVQIASENGHLEVVKYLVSQGIDFRE, DDLTFDMALRKGHVEIVKYLVGQGVDFRV, DDYPVRMASHCGRLGVVKYFVSQGADVRA, EDDYAVRMSAEKGHIEVVKFLVDNGANIRA, and NDYAVRLASENGHIKIVEYLVSMGAVLNK.

This chain is Putative ankyrin repeat protein R873, found in Acanthamoeba polyphaga mimivirus (APMV).